We begin with the raw amino-acid sequence, 489 residues long: UDP-glycosyltransferase 85A1 (489 aa).

UDP-alpha-D-glucose-binding positions include Ser-307, 364-366 (CPQ), 381-389 (HCGWNSILE), and 403-406 (FADQ).

Belongs to the UDP-glycosyltransferase family. As to expression, expressed in root tips, lateral root initials, root apex, shoots, leaf periphery, leaf primordia and flowers.

In terms of biological role, involved in the O-glucosylation of trans-zeatin and dihydrozeatin. Also active in vitro on cis-zeatin. Not active on N-glucosylated substrates. This chain is UDP-glycosyltransferase 85A1 (UGT85A1), found in Arabidopsis thaliana (Mouse-ear cress).